We begin with the raw amino-acid sequence, 432 residues long: C-type cytochrome OmcS (432 aa).

The first 25 residues, 1–25, serve as a signal peptide directing secretion; it reads MKKGMKVSLSVAAAALLMSAPAAFA.

It depends on heme as a cofactor.

The protein localises to the cell outer membrane. It is found in the cell surface. Plays an important role in extracellular electron transfer. Can transfer electrons to insoluble Fe(3+) oxides as well as other extracellular electron acceptors, including Mn(4+) oxide and humic substances. Essential for direct interspecies electron transfer (DIET) in cocultures with G.metallireducens. The protein is C-type cytochrome OmcS of Geobacter sulfurreducens (strain ATCC 51573 / DSM 12127 / PCA).